We begin with the raw amino-acid sequence, 697 residues long: MSRRSDLSDKDSQSRKRHWLTDQAVTNEEKEQSPTKRTRKTKSQGLGGLFNTFFGMFVSSNSGEKEKTEVSGEVQVQEDDEIIVEGTTRRVAENKKYMIFLNEDAPVRANAGSEENEVIIEKHVQKNVEIRNDEEKQEVQGDLVLTLSSSPKSPKNLEKSFEVQQDDEEPDVLFEKVVKTPNKQLQEARRFQNELIFLNDNPDTPDDVSVISDSRSKEFISPTPDDSVSRPITPSLSSLSNYTSNNVRDYWRRNSAKKPEVLRRVPVRHQFKHSTSVRKMNTIIDLKKIKNHLSSRDRLLQGVVASGQYEAKAISGIVEKKPKKMQRTSSTDILARAKNKIAELGGSRSNTPSLLSREPSIIIDSEESTSSSYRQHARSNSSESDSYRKLNDILSQINSLGIGSAYRGPQRYQNSYQLSKQKEDKLLEEARIREGHRSQTRGDRLEDVRKRLELQGIAIRPKVEKKKVDDFMALPDAADALVERAWSGGNPNEQFVDAFSIQICKKDLATLSGLHWLNDEIINFYLQLICDRSNGDSKYPKIYAFNTFFYSNIVSKGYASVKRWTRKVDIFAFDIVLVPVHLGMHWCMAVIDMGEKKIEFYDSLYDGNTAVLPALRGYLEAESLDKKKTAMNFSGWTIQQMTDIPRQQNGSDCGVFSCQFGEWASRRTTPRFTQKNMPYYRKRMVYEIVSKKLLATI.

Over residues 1–14 the composition is skewed to basic and acidic residues; sequence MSRRSDLSDKDSQS. 2 disordered regions span residues 1-47 and 365-387; these read MSRR…QGLG and SEES…SDSY. A Nuclear localization signal motif is present at residues 15–19; it reads RKRHW. The Nuclear localization signal motif lies at 462 to 467; sequence KVEKKK. The segment at 501-664 is protease; it reads IQICKKDLAT…VFSCQFGEWA (164 aa). Catalysis depends on residues histidine 585, aspartate 602, and cysteine 653.

Belongs to the peptidase C48 family.

The protein localises to the nucleus envelope. In terms of biological role, protease that deconjugates smo-1 from targeted proteins and may catalyze the processing of smo-1 to its mature form. In Caenorhabditis elegans, this protein is Sentrin-specific protease (ulp-1).